We begin with the raw amino-acid sequence, 33 residues long: GDCLPHLKRCKADNDCCGKKCKRRGTNAEKRCR.

3 disulfides stabilise this stretch: Cys3-Cys17, Cys10-Cys21, and Cys16-Cys32. Important for stimulation of [3H]ryanodine binding to RYR1 stretches follow at residues 8-9 and 19-20; these read KR and KK. The segment at 22 to 24 is essential for stimulation of [3H]ryanodine binding to RYR1; that stretch reads KRR. Residues 25-27 form an important for stimulation of [3H]ryanodine binding to RYR1 region; that stretch reads GTN.

This sequence belongs to the scorpion calcin family. In terms of tissue distribution, expressed by the venom gland.

The protein localises to the secreted. Functionally, this toxin affects the activity of ryanodine receptors 1, 2 and 3 (RyR1, RyR2 and RyR3). At lower concentrations the toxin increases full openings of the RyRs, and at higher concentrations it inhibits full openings and induces openings to subconductance levels (30% of the full conductance state) and reduces the number of full conductance openings. The different actions may be attributed to the toxins binding at different sites on the RyRs, with binding at a high-affinity site mediating the increase in full openings and the induction of subconductance states evoked upon binding to a lower-affinity site. Furthermore, it triggers calcium release from sarcoplasmic vesicles (11.7 nM are enough to induce a sharp release, and 70% of the total calcium is released after toxin (100 nM) addition) probably by acting as a cell-penetrating peptide (CPP). In addition, it has been shown to dose-dependently stimulate ryanodine binding to RyR1 (EC(50)=8.7 nM). It also augments the bell-shaped calcium-[3H]ryanodine binding curve that is maximal at about 10 uM calcium concentration. It binds a different site as ryanodine. It acts synergistically with caffeine. In vivo, intracerebroventricular injection into mice induces neurotoxic symptoms, followed by death. The sequence is that of Imperacalcin from Pandinus imperator (Emperor scorpion).